The chain runs to 1562 residues: E3 ubiquitin-protein ligase listerin (1562 aa).

HEAT repeat units lie at residues 41-78, 127-164, 175-217, 262-301, 304-348, 495-532, 555-592, 813-850, 908-945, 997-1037, 1047-1085, 1188-1226, 1263-1298, and 1299-1339; these read SLYS…DFNQ, KFLK…KDPA, EQLL…SAVL, ETVL…ITSK, LKVC…VSRT, SAIS…FLDS, STYQ…VALS, IRYA…DYNC, YYSR…KTVR, FKSL…WLDS, TVRL…DSLS, INQS…SDVD, NSFI…KEAG, and LINR…NFSP. The segment at 1508–1555 adopts an RING-type zinc-finger fold; the sequence is CAICYSILHAVDRKLPSKTCPTCKNKFHGACLYKWFRSSGNNTCPLCR.

Belongs to the LTN1 family. In terms of assembly, component of the ribosome quality control complex (RQC), composed of the E3 ubiquitin ligase RKR1/LTN1, RQC1 and RQC2, as well as CDC48 and its ubiquitin-binding cofactors associated with the 60S ribosomal subunits.

It localises to the nucleus. Its subcellular location is the cytoplasm. The protein localises to the cytosol. The enzyme catalyses S-ubiquitinyl-[E2 ubiquitin-conjugating enzyme]-L-cysteine + [acceptor protein]-L-lysine = [E2 ubiquitin-conjugating enzyme]-L-cysteine + N(6)-ubiquitinyl-[acceptor protein]-L-lysine.. The protein operates within protein modification; protein ubiquitination. In terms of biological role, E3 ubiquitin-protein ligase component of the ribosome quality control complex (RQC), a ribosome-associated complex that mediates ubiquitination and extraction of incompletely synthesized nascent chains for proteasomal degradation. Mediates ubiquitination of proteins derived from mRNAs lacking stop codons (non-stop proteins) and other translation arrest products induced by poly-lysine sequences and tandem rare codons. Ubiquitination leads to CDC48 recruitment for extraction and degradation of the incomplete translation product. May indirectly play a role in chromatin function and transcription. The polypeptide is E3 ubiquitin-protein ligase listerin (Saccharomyces cerevisiae (strain ATCC 204508 / S288c) (Baker's yeast)).